We begin with the raw amino-acid sequence, 166 residues long: CDP-archaeol synthase (166 aa).

Helical transmembrane passes span 42–62 (LVLGILSGVLLGLIQVSVQDA), 73–93 (VLSVLLLAVGALAGDMVKSFV), 103–123 (AAWPLADQYDLVAGSLLLLLI), and 128–148 (FAAVNLTIPVIFWILVLTPLL).

It belongs to the CDP-archaeol synthase family. Mg(2+) serves as cofactor.

It is found in the cell membrane. It carries out the reaction 2,3-bis-O-(geranylgeranyl)-sn-glycerol 1-phosphate + CTP + H(+) = CDP-2,3-bis-O-(geranylgeranyl)-sn-glycerol + diphosphate. It participates in membrane lipid metabolism; glycerophospholipid metabolism. Catalyzes the formation of CDP-2,3-bis-(O-geranylgeranyl)-sn-glycerol (CDP-archaeol) from 2,3-bis-(O-geranylgeranyl)-sn-glycerol 1-phosphate (DGGGP) and CTP. This reaction is the third ether-bond-formation step in the biosynthesis of archaeal membrane lipids. This chain is CDP-archaeol synthase, found in Methanosphaerula palustris (strain ATCC BAA-1556 / DSM 19958 / E1-9c).